A 346-amino-acid polypeptide reads, in one-letter code: UDP-3-O-acylglucosamine N-acyltransferase (346 aa).

His-253 acts as the Proton acceptor in catalysis.

Belongs to the transferase hexapeptide repeat family. LpxD subfamily. As to quaternary structure, homotrimer.

It carries out the reaction a UDP-3-O-[(3R)-3-hydroxyacyl]-alpha-D-glucosamine + a (3R)-hydroxyacyl-[ACP] = a UDP-2-N,3-O-bis[(3R)-3-hydroxyacyl]-alpha-D-glucosamine + holo-[ACP] + H(+). It participates in bacterial outer membrane biogenesis; LPS lipid A biosynthesis. Catalyzes the N-acylation of UDP-3-O-acylglucosamine using 3-hydroxyacyl-ACP as the acyl donor. Is involved in the biosynthesis of lipid A, a phosphorylated glycolipid that anchors the lipopolysaccharide to the outer membrane of the cell. The protein is UDP-3-O-acylglucosamine N-acyltransferase of Rickettsia conorii (strain ATCC VR-613 / Malish 7).